We begin with the raw amino-acid sequence, 307 residues long: Ubiquitin recognition factor in ER-associated degradation protein 1 (307 aa).

Met1 bears the N-acetylmethionine mark. 5 positions are modified to phosphoserine: Ser129, Ser231, Ser245, Ser247, and Ser299. 2 disordered regions span residues 230–255 and 288–307; these read GSGNRLDGKKKGVEPSPSPIKPGDIK and GRFIAFSGEGQSLRKKGRKP.

Belongs to the UFD1 family. As to quaternary structure, heterodimer with NPLOC4, this heterodimer binds VCP and inhibits Golgi membrane fusion. Interacts with USP13. Interacts with ZFAND2B; probably through VCP.

It is found in the nucleus. The protein localises to the cytoplasm. The protein resides in the cytosol. It participates in protein degradation; proteasomal ubiquitin-dependent pathway. In terms of biological role, essential component of the ubiquitin-dependent proteolytic pathway which degrades ubiquitin fusion proteins. The ternary complex containing UFD1, VCP and NPLOC4 binds ubiquitinated proteins and is necessary for the export of misfolded proteins from the ER to the cytoplasm, where they are degraded by the proteasome. The NPLOC4-UFD1-VCP complex regulates spindle disassembly at the end of mitosis and is necessary for the formation of a closed nuclear envelope. It may be involved in the development of some ectoderm-derived structures. Acts as a negative regulator of type I interferon production via the complex formed with VCP and NPLOC4, which binds to RIGI and recruits RNF125 to promote ubiquitination and degradation of RIGI. In Mus musculus (Mouse), this protein is Ubiquitin recognition factor in ER-associated degradation protein 1.